A 452-amino-acid chain; its full sequence is Photoreceptor ankyrin repeat protein (452 aa).

ANK repeat units lie at residues 94–123, 130–160, 164–193, and 223–257; these read CRLGALYWACVHNDPTQLQAILDGGVSPEE, NGRTGLMVACYHGFQSVVALLSHCPFLDVNQ, GGDTALMLAAQAGHVPLVSLLLNYYVGLDL, and RGKTALEWAVLTDSFDTVWRIRQLLRRPQVEQLSQ. Disordered stretches follow at residues 335–369 and 405–427; these read LGTRSKSVPELLGTAPPPPLVPQSPPGSPQRSPWV and SKASSSSHQCQPKPSPSGHQSLA. The segment covering 349 to 362 has biased composition (pro residues); it reads APPPPLVPQSPPGS. Polar residues predominate over residues 406-424; it reads KASSSSHQCQPKPSPSGHQ.

Its subcellular location is the cytoplasm. It is found in the cytosol. The protein localises to the nucleus. Functionally, acts as a transcriptional repressor for CRX-activated photoreceptor gene regulation. The polypeptide is Photoreceptor ankyrin repeat protein (Homo sapiens (Human)).